Here is a 134-residue protein sequence, read N- to C-terminus: Crustacean hyperglycemic hormones isoform A (134 aa).

Positions 1–24 (MMACRTLCLVVVMVASLGTSGVGG) are cleaved as a signal peptide. Pyrrolidone carboxylic acid is present on Gln-61. Position 63 is a D-phenylalanine; in form CHH-A-II (Phe-63). 3 cysteine pairs are disulfide-bonded: Cys-67–Cys-103, Cys-83–Cys-99, and Cys-86–Cys-112. Valine amide is present on Val-132.

It belongs to the arthropod CHH/MIH/GIH/VIH hormone family. Stereoinversion of L-Phe (form CHH-A-I) to D-Phe (form CHH-A-II). In terms of tissue distribution, produced by the medulla terminalis X-organ in the eyestalks and transported to the sinus gland where they are stored and released. Present also in the ventral nervous system.

The protein resides in the secreted. Its function is as follows. CHH is the most abundant hormone in the sinus gland of isopods and decapods which controls the blood sugar level. Has a secretagogue action over the amylase released from the midgut gland. May act as a stress hormone. In terms of biological role, MIH may inhibit Y-organs where molting hormone (ecdysteroid) is secreted and a molting cycle is initiated when MIH secretion diminishes or stops. This is Crustacean hyperglycemic hormones isoform A from Homarus americanus (American lobster).